A 400-amino-acid chain; its full sequence is Phosphoglycerate kinase (400 aa).

Substrate contacts are provided by residues 24–26 (DFN), Arg40, 63–66 (HFGR), Arg121, and Arg154. Residues Lys205, Gly296, Glu327, and 356 to 359 (GGDS) contribute to the ATP site.

The protein belongs to the phosphoglycerate kinase family. In terms of assembly, monomer.

The protein resides in the cytoplasm. It carries out the reaction (2R)-3-phosphoglycerate + ATP = (2R)-3-phospho-glyceroyl phosphate + ADP. The protein operates within carbohydrate degradation; glycolysis; pyruvate from D-glyceraldehyde 3-phosphate: step 2/5. This Nostoc punctiforme (strain ATCC 29133 / PCC 73102) protein is Phosphoglycerate kinase.